The sequence spans 461 residues: General transcription and DNA repair factor IIH subunit SSL1 (461 aa).

Residues 1–70 form a disordered region; that stretch reads MAPVVISESE…RLSNRNLQGS (70 aa). Residues 26–37 are compositionally biased toward basic and acidic residues; the sequence is VHFDGEGDDRVD. The segment covering 53 to 63 has biased composition (basic residues); that stretch reads HVQRKKKKRLS. One can recognise a VWFA domain in the interval 125 to 304; sequence SLILTLDCSE…THLKELFNEA (180 aa). A C4-type zinc finger spans residues 349 to 366; sequence CPNCHSKVCSLPTVCPCC.

It belongs to the GTF2H2 family. In terms of assembly, component of the 7-subunit TFIIH core complex composed of XPB/SSL2, XPD/RAD3, SSL1, TFB1, TFB2, TFB4 and TFB5, which is active in NER. The core complex associates with the 3-subunit CTD-kinase module TFIIK composed of CCL1, KIN28 and TFB3 to form the 10-subunit holoenzyme (holo-TFIIH) active in transcription. An additionnal subunit, TFB6, plays a role in the dissociation of the SSL2 helicase from TFIIH after transcription initiation.

The protein localises to the nucleus. Its function is as follows. Component of the general transcription and DNA repair factor IIH (TFIIH) core complex, which is involved in general and transcription-coupled nucleotide excision repair (NER) of damaged DNA and, when complexed to TFIIK, in RNA transcription by RNA polymerase II. In NER, TFIIH acts by opening DNA around the lesion to allow the excision of the damaged oligonucleotide and its replacement by a new DNA fragment. In transcription, TFIIH has an essential role in transcription initiation. When the pre-initiation complex (PIC) has been established, TFIIH is required for promoter opening and promoter escape. Phosphorylation of the C-terminal tail (CTD) of the largest subunit of RNA polymerase II by the kinase module TFIIK controls the initiation of transcription. This Saccharomyces cerevisiae (strain ATCC 204508 / S288c) (Baker's yeast) protein is General transcription and DNA repair factor IIH subunit SSL1 (SSL1).